A 461-amino-acid chain; its full sequence is Elongation factor 1-alpha, oocyte form (461 aa).

At G2 the chain carries N,N,N-trimethylglycine. The region spanning 5 to 242 (KIHINIVVIG…DCIIPPQRPT (238 aa)) is the tr-type G domain. The tract at residues 14 to 21 (GHVDSGKS) is G1. 14-21 (GHVDSGKS) is a GTP binding site. Residues 70 to 74 (GITID) are G2. The interval 91-94 (DAPG) is G3. Residues 91–95 (DAPGH) and 153–156 (NKMD) each bind GTP. The interval 153–156 (NKMD) is G4. The segment at 194 to 196 (SGW) is G5. A 5-glutamyl glycerylphosphorylethanolamine mark is found at E301 and E374.

It belongs to the TRAFAC class translation factor GTPase superfamily. Classic translation factor GTPase family. EF-Tu/EF-1A subfamily. As to expression, oocyte.

Its subcellular location is the cytoplasm. Functionally, this protein promotes the GTP-dependent binding of aminoacyl-tRNA to the A-site of ribosomes during protein biosynthesis. The sequence is that of Elongation factor 1-alpha, oocyte form from Xenopus laevis (African clawed frog).